The sequence spans 622 residues: Chaperone protein HscA homolog (622 aa).

Belongs to the heat shock protein 70 family.

Its function is as follows. Chaperone involved in the maturation of iron-sulfur cluster-containing proteins. Has a low intrinsic ATPase activity which is markedly stimulated by HscB. The polypeptide is Chaperone protein HscA homolog (Delftia acidovorans (strain DSM 14801 / SPH-1)).